The following is a 487-amino-acid chain: MAAAGSSQAPISFGFNRSSKKKLLVSDGEKEEEHEKEYLVGAEGKELLSANPAPESKPLVIPLIHKNRWAKPNKDKEEDAAPQTEDEAVLSQAVKELIEESRRAQEDNSETNQTLSIPLLMQNRMPDGYEDREKVDVSLRPDSAEAADYDVVPVQQYGMAMLRGMGWKEGEGIGRTFKQDVKPLEQKLRPKGLGLGADRSALKHLEPQKPRKPLKPGEEPEEESKGLGTGSAVQIQSGAYKDMYGKVEGIDPDNSRAMITLAIGGKVVTVSLFSLRLVNSAEYTKYAKDLSRLSKVHQESKVEPHRDRTPEKEQGRKGGEKRSESSRNADVKLSKSSGNGDSNNREKRHRQRSPEQEKEKKKIRPEPHGWLRRDIRVRFIDKNYKGGKYYNSKMLVEDVLSPTRCVCRTENGCILEDIRQDMLETIIPKEEGEHVMVVLGKYRGMVGKILHRDKQKSRALVQLQGEHDSAETLSYDAICHYTGAQDD.

Disordered stretches follow at residues 65–121 (HKNR…PLLM), 181–232 (VKPL…TGSA), and 295–367 (KVHQ…RPEP). The stretch at 88-116 (AVLSQAVKELIEESRRAQEDNSETNQTLS) forms a coiled coil. Composition is skewed to basic and acidic residues over residues 96-106 (ELIEESRRAQE) and 200-209 (SALKHLEPQK). The region spanning 154 to 200 (VQQYGMAMLRGMGWKEGEGIGRTFKQDVKPLEQKLRPKGLGLGADRS) is the G-patch domain. The region spanning 226 to 253 (GLGTGSAVQIQSGAYKDMYGKVEGIDPD) is the KOW 1 domain. 2 stretches are compositionally biased toward basic and acidic residues: residues 295–333 (KVHQESKVEPHRDRTPEKEQGRKGGEKRSESSRNADVKL) and 352–367 (RSPEQEKEKKKIRPEP). Positions 428 to 455 (PKEEGEHVMVVLGKYRGMVGKILHRDKQ) constitute a KOW 2 domain.

This sequence belongs to the MOS2 family. In terms of assembly, component of the minor spliceosome, which splices U12-type introns.

Its subcellular location is the nucleus. In terms of biological role, RNA-binding protein involved in pre-mRNA splicing. This chain is G-patch domain and KOW motifs-containing protein (gpkow), found in Xenopus laevis (African clawed frog).